We begin with the raw amino-acid sequence, 757 residues long: Vitamin K-dependent gamma-carboxylase (757 aa).

Position 2 is an N-acetylalanine (Ala-2). Over Ala-2–Asp-60 the chain is Cytoplasmic. Residues Pro-61 to Gln-81 traverse the membrane as a helical segment. Over Glu-82–Asp-113 the chain is Lumenal. A disulfide bridge links Cys-99 with Cys-450. A helical membrane pass occupies residues Trp-114–Cys-134. Over Tyr-135–Arg-136 the chain is Cytoplasmic. The chain crosses the membrane as a helical span at residues Leu-137–Trp-157. At Asn-158–Gln-292 the chain is on the lumenal side. The chain crosses the membrane as a helical span at residues Leu-293–Ala-313. Residues Glu-314–Gln-361 lie on the Cytoplasmic side of the membrane. Residues Leu-362 to Phe-382 form a helical membrane-spanning segment. The Lumenal portion of the chain corresponds to Leu-383–Phe-757. The tract at residues Glu-729–Phe-757 is disordered. Over residues Ser-734 to Pro-745 the composition is skewed to polar residues. Over residues Ser-746–Phe-757 the composition is skewed to basic and acidic residues.

Belongs to the vitamin K-dependent gamma-carboxylase family. As to quaternary structure, monomer. May interact with CALU.

The protein localises to the endoplasmic reticulum membrane. The catalysed reaction is 4-carboxy-L-glutamyl-[protein] + 2,3-epoxyphylloquinone + H2O + H(+) = phylloquinol + L-glutamyl-[protein] + CO2 + O2. Its function is as follows. Mediates the vitamin K-dependent carboxylation of glutamate residues to calcium-binding gamma-carboxyglutamate (Gla) residues with the concomitant conversion of the reduced hydroquinone form of vitamin K to vitamin K epoxide. Catalyzes gamma-carboxylation of various proteins, such as blood coagulation factors (F2, F7, F9 and F10), osteocalcin (bglap and bglap2) or matrix Gla protein (MGP). This is Vitamin K-dependent gamma-carboxylase (Ggcx) from Mus musculus (Mouse).